The following is an 87-amino-acid chain: Small ribosomal subunit protein bS18 (87 aa).

A disordered region spans residues 1–21 (MRHKPTPPKGNKSLGNALASK).

The protein belongs to the bacterial ribosomal protein bS18 family. In terms of assembly, part of the 30S ribosomal subunit. Forms a tight heterodimer with protein bS6.

Functionally, binds as a heterodimer with protein bS6 to the central domain of the 16S rRNA, where it helps stabilize the platform of the 30S subunit. This is Small ribosomal subunit protein bS18 from Chlorobium phaeobacteroides (strain DSM 266 / SMG 266 / 2430).